Here is a 217-residue protein sequence, read N- to C-terminus: 8-oxoguanine DNA glycosylase/AP lyase (217 aa).

Residues Lys-138 and Asp-157 contribute to the active site.

The protein belongs to the type-2 OGG1 family.

The enzyme catalyses 2'-deoxyribonucleotide-(2'-deoxyribose 5'-phosphate)-2'-deoxyribonucleotide-DNA = a 3'-end 2'-deoxyribonucleotide-(2,3-dehydro-2,3-deoxyribose 5'-phosphate)-DNA + a 5'-end 5'-phospho-2'-deoxyribonucleoside-DNA + H(+). In terms of biological role, catalyzes the excision of an oxidatively damaged form of guanine (7,8-dihydro-8-oxoguanine = 8-oxoG) from DNA. Also cleaves the DNA backbone at apurinic/apyrimidinic sites (AP sites). This Fusobacterium nucleatum subsp. nucleatum (strain ATCC 25586 / DSM 15643 / BCRC 10681 / CIP 101130 / JCM 8532 / KCTC 2640 / LMG 13131 / VPI 4355) protein is 8-oxoguanine DNA glycosylase/AP lyase.